The chain runs to 156 residues: Ribosomal RNA large subunit methyltransferase H (156 aa).

Residues Leu-73, Gly-104, and Ile-123–Leu-128 each bind S-adenosyl-L-methionine.

Belongs to the RNA methyltransferase RlmH family. As to quaternary structure, homodimer.

The protein localises to the cytoplasm. The enzyme catalyses pseudouridine(1915) in 23S rRNA + S-adenosyl-L-methionine = N(3)-methylpseudouridine(1915) in 23S rRNA + S-adenosyl-L-homocysteine + H(+). Functionally, specifically methylates the pseudouridine at position 1915 (m3Psi1915) in 23S rRNA. In Burkholderia cenocepacia (strain HI2424), this protein is Ribosomal RNA large subunit methyltransferase H.